The following is a 447-amino-acid chain: Probable alpha-galactosidase B (447 aa).

Residues 1–25 form the signal peptide; sequence MTTFFSLTTAAAVLTLARGSNALVR. 2 cysteine pairs are disulfide-bonded: Cys-45-Cys-77 and Cys-127-Cys-157. Catalysis depends on Asp-155, which acts as the Nucleophile. Residues Asn-162 and Asn-180 are each glycosylated (N-linked (GlcNAc...) asparagine). 225–229 is a binding site for substrate; that stretch reads EWGQA. N-linked (GlcNAc...) asparagine glycosylation is present at Asn-236. The Proton donor role is filled by Asp-247. Asn-286 carries an N-linked (GlcNAc...) asparagine glycan.

It belongs to the glycosyl hydrolase 27 family.

Its subcellular location is the secreted. The catalysed reaction is Hydrolysis of terminal, non-reducing alpha-D-galactose residues in alpha-D-galactosides, including galactose oligosaccharides, galactomannans and galactolipids.. Hydrolyzes a variety of simple alpha-D-galactoside as well as more complex molecules such as oligosaccharides and polysaccharides. This chain is Probable alpha-galactosidase B (aglB), found in Aspergillus fumigatus (strain ATCC MYA-4609 / CBS 101355 / FGSC A1100 / Af293) (Neosartorya fumigata).